A 392-amino-acid polypeptide reads, in one-letter code: Formate-dependent phosphoribosylglycinamide formyltransferase (392 aa).

N(1)-(5-phospho-beta-D-ribosyl)glycinamide is bound by residues 22-23 and Glu-82; that span reads EL. ATP contacts are provided by residues Arg-114, Lys-155, 160–165, 195–198, and Glu-203; these read SSGKGQ and EGLV. In terms of domain architecture, ATP-grasp spans 119 to 308; sequence RLAAETLSLP…EFALHVRAFL (190 aa). Residues Glu-267 and Glu-279 each coordinate Mg(2+). N(1)-(5-phospho-beta-D-ribosyl)glycinamide is bound by residues Asp-286, Lys-355, and 362-363; that span reads RR.

Belongs to the PurK/PurT family. Homodimer.

The enzyme catalyses N(1)-(5-phospho-beta-D-ribosyl)glycinamide + formate + ATP = N(2)-formyl-N(1)-(5-phospho-beta-D-ribosyl)glycinamide + ADP + phosphate + H(+). It participates in purine metabolism; IMP biosynthesis via de novo pathway; N(2)-formyl-N(1)-(5-phospho-D-ribosyl)glycinamide from N(1)-(5-phospho-D-ribosyl)glycinamide (formate route): step 1/1. Involved in the de novo purine biosynthesis. Catalyzes the transfer of formate to 5-phospho-ribosyl-glycinamide (GAR), producing 5-phospho-ribosyl-N-formylglycinamide (FGAR). Formate is provided by PurU via hydrolysis of 10-formyl-tetrahydrofolate. This Sodalis glossinidius (strain morsitans) protein is Formate-dependent phosphoribosylglycinamide formyltransferase.